A 242-amino-acid polypeptide reads, in one-letter code: ATP synthase subunit a, organellar chromatophore (242 aa).

5 consecutive transmembrane segments (helical) span residues 28–48 (LHGQ…VLVI), 89–109 (LPFI…GALV), 128–148 (INTT…AGLS), 193–213 (LVVG…AMFL), and 214–234 (GLFT…NYIG).

Belongs to the ATPase A chain family. In terms of assembly, F-type ATPases have 2 components, CF(1) - the catalytic core - and CF(0) - the membrane proton channel. CF(1) has five subunits: alpha(3), beta(3), gamma(1), delta(1), epsilon(1). CF(0) has four main subunits: a, b, b' and c.

The protein resides in the plastid. It is found in the organellar chromatophore thylakoid membrane. In terms of biological role, key component of the proton channel; it plays a direct role in the translocation of protons across the membrane. The chain is ATP synthase subunit a, organellar chromatophore from Paulinella chromatophora.